A 53-amino-acid polypeptide reads, in one-letter code: Conotoxin Vc5.3 (53 aa).

Positions 1-15 (VILLLLTASAPSVDA) are cleaved as a signal peptide. The propeptide occupies 16–41 (RPKTEDVPLSSFRDNTKSTLQRLLKR).

This sequence belongs to the conotoxin T superfamily. Contains 2 disulfide bonds that can be either 'C1-C3, C2-C4' or 'C1-C4, C2-C3', since these disulfide connectivities have been observed for conotoxins with cysteine framework V (for examples, see AC P0DQQ7 and AC P81755). Expressed by the venom duct.

It localises to the secreted. This is Conotoxin Vc5.3 from Conus victoriae (Queen Victoria cone).